Consider the following 419-residue polypeptide: Tyrosine--tRNA ligase (419 aa).

L-tyrosine is bound at residue Tyr-34. Residues Pro-39–His-48 carry the 'HIGH' region motif. L-tyrosine-binding residues include Tyr-168 and Gln-172. Positions Lys-230–Ser-234 match the 'KMSKS' region motif. Lys-233 is a binding site for ATP. Residues Ala-352–Tyr-418 form the S4 RNA-binding domain.

The protein belongs to the class-I aminoacyl-tRNA synthetase family. TyrS type 1 subfamily. As to quaternary structure, homodimer.

It is found in the cytoplasm. It catalyses the reaction tRNA(Tyr) + L-tyrosine + ATP = L-tyrosyl-tRNA(Tyr) + AMP + diphosphate + H(+). Functionally, catalyzes the attachment of tyrosine to tRNA(Tyr) in a two-step reaction: tyrosine is first activated by ATP to form Tyr-AMP and then transferred to the acceptor end of tRNA(Tyr). In Listeria monocytogenes serotype 4a (strain HCC23), this protein is Tyrosine--tRNA ligase.